A 313-amino-acid chain; its full sequence is Expansin-like A4 (313 aa).

Positions 1-30 (MDDNGDVHFCHRATAVVALLLLHLVVVANA) are cleaved as a signal peptide. In terms of domain architecture, Expansin-like EG45 spans 59 to 173 (GGACGFGAAP…RRIPCEYRES (115 aa)). The N-linked (GlcNAc...) asparagine glycan is linked to Asn-124. Residues 188–281 (THLAIRFLYQ…DWRPGEVYDT (94 aa)) form the Expansin-like CBD domain.

This sequence belongs to the expansin family. Expansin-like A subfamily.

It localises to the secreted. In Oryza sativa subsp. japonica (Rice), this protein is Expansin-like A4 (EXLA4).